The sequence spans 228 residues: VIGGDECNINEHRFLVALYDGLSGTFLCGGTLINQEWVLTAQHCNRSLMNIYLGMHNKNVKFDDEQRRYPKKKYFFRCNKNFTKWDEDIRLNRPVRFSAHIEPLSLPSNPPSEDSVCRVMGWGQITSPPETLPDVPHCANINLFNYTVCRGAYPRMPTKVLCAGVLEGGIDTCNRDSGGPLICNGQFQGIVFWGPDPCAQPDKPGVYTKVFDYLDWIQSVIAGNTTCS.

In terms of domain architecture, Peptidase S1 spans 1–222 (VIGGDECNIN…YLDWIQSVIA (222 aa)). 6 disulfides stabilise this stretch: C7/C138, C28/C44, C78/C227, C117/C183, C149/C162, and C173/C198. The Charge relay system role is filled by H43. Residues N45 and N81 are each glycosylated (N-linked (GlcNAc...) asparagine). The active-site Charge relay system is the D88. N145 is a glycosylation site (N-linked (GlcNAc...) asparagine). S177 (charge relay system) is an active-site residue. N-linked (GlcNAc...) asparagine glycosylation occurs at N224.

This sequence belongs to the peptidase S1 family. Snake venom subfamily. In terms of assembly, monomer. As to expression, expressed by the venom gland.

It localises to the secreted. It catalyses the reaction Selective cleavage of Arg-|-Xaa bond in fibrinogen, to form fibrin, and release fibrinopeptide A. The specificity of further degradation of fibrinogen varies with species origin of the enzyme.. Inhibited competitively by amidines and guanidines, and irreversibly inhibited by diisopropylfluorophosphate. Thrombin-like snake venom serine protease, that cleaves alpha-chain of fibrinogen (FGA) releases only fibrinopeptide A. Shows coagulant, esterase and amidase activities. Induces the barrel rotation syndrome in mice, which is manifested by gyroxin-like, rapid rolling motions. May also reversibly increase the permeability of the blood brain barrier (BBB) in mice. This Lachesis muta muta (Bushmaster) protein is Thrombin-like enzyme gyroxin analog.